Here is a 195-residue protein sequence, read N- to C-terminus: Ribonuclease HII (195 aa).

One can recognise an RNase H type-2 domain in the interval 1–195 (MICGIDEAGR…SWRTLRYLNT (195 aa)). A divalent metal cation-binding residues include aspartate 6, glutamate 7, and aspartate 101.

Belongs to the RNase HII family. Mn(2+) is required as a cofactor. The cofactor is Mg(2+).

Its subcellular location is the cytoplasm. It catalyses the reaction Endonucleolytic cleavage to 5'-phosphomonoester.. In terms of biological role, endonuclease that specifically degrades the RNA of RNA-DNA hybrids. This chain is Ribonuclease HII, found in Pyrobaculum islandicum (strain DSM 4184 / JCM 9189 / GEO3).